A 381-amino-acid chain; its full sequence is L-lactate dehydrogenase (381 aa).

One can recognise an FMN hydroxy acid dehydrogenase domain in the interval 1-380; sequence MIISSTNDYR…TRDALVDLSK (380 aa). Tyr-24 provides a ligand contact to substrate. Residues Ser-106 and Gln-127 each coordinate FMN. Substrate is bound at residue Tyr-129. Thr-155 contacts FMN. Arg-164 is a substrate binding site. Lys-251 contacts FMN. His-275 serves as the catalytic Proton acceptor. Arg-278 lines the substrate pocket. An FMN-binding site is contributed by 306 to 330; it reads DSGIRNGLDIVRMLALGADATMLGR.

Belongs to the FMN-dependent alpha-hydroxy acid dehydrogenase family. Requires FMN as cofactor.

It is found in the cell inner membrane. The enzyme catalyses (S)-lactate + A = pyruvate + AH2. Its function is as follows. Catalyzes the conversion of L-lactate to pyruvate. Is coupled to the respiratory chain. The polypeptide is L-lactate dehydrogenase (Actinobacillus pleuropneumoniae serotype 3 (strain JL03)).